The primary structure comprises 166 residues: MFKKLFGKAKEVDKNIKIYAPLTGEYVKIEDIPDPVFAQKMMGEGFGINPTEGEVVSPIEGKVDNVFPTKHAVGLKAENGLELLVHIGLDTVQLDGKGFEVLVESGDDIKIGDPLIRFDLEYINNNAKSIISPIIITNSDQTESIHIEDVQAVVKGETQVIDVTVS.

Residues Asp-34 to Asn-138 enclose the PTS EIIA type-1 domain. Positions 71 and 86 each coordinate Zn(2+). His-86 (tele-phosphohistidine intermediate; for EIIA activity) is an active-site residue. His-86 is modified (phosphohistidine; by HPr).

In terms of assembly, heterodimer with glycerol kinase (glpk). Zn(2+) is required as a cofactor.

It localises to the cytoplasm. The phosphoenolpyruvate-dependent sugar phosphotransferase system (sugar PTS), a major carbohydrate active transport system, catalyzes the phosphorylation of incoming sugar substrates concomitantly with their translocation across the cell membrane. The enzyme II complex composed of PtsG and Crr is involved in glucose transport. The polypeptide is PTS system glucose-specific EIIA component (crr) (Staphylococcus epidermidis (strain ATCC 35984 / DSM 28319 / BCRC 17069 / CCUG 31568 / BM 3577 / RP62A)).